A 529-amino-acid polypeptide reads, in one-letter code: Probable cytochrome P450 6t1 (529 aa).

Residue C472 participates in heme binding.

This sequence belongs to the cytochrome P450 family. Heme is required as a cofactor.

Its subcellular location is the endoplasmic reticulum membrane. It is found in the microsome membrane. May be involved in the metabolism of insect hormones and in the breakdown of synthetic insecticides. The sequence is that of Probable cytochrome P450 6t1 (Cyp6t1) from Drosophila melanogaster (Fruit fly).